Here is a 171-residue protein sequence, read N- to C-terminus: Dual specificity protein phosphatase OPG106 (171 aa).

The protein belongs to the protein-tyrosine phosphatase family. Non-receptor class dual specificity subfamily. In terms of assembly, homodimer.

It is found in the virion. The protein resides in the host cytoplasm. It catalyses the reaction O-phospho-L-tyrosyl-[protein] + H2O = L-tyrosyl-[protein] + phosphate. The catalysed reaction is O-phospho-L-seryl-[protein] + H2O = L-seryl-[protein] + phosphate. In terms of biological role, serine/tyrosine phosphatase which down-regulates cellular antiviral response by dephosphorylating activated host STAT1 and blocking interferon (IFN)-stimulated innate immune responses. Dephosphorylates the OPG144 protein. The protein is Dual specificity protein phosphatase OPG106 (OPG106) of Monkeypox virus.